Consider the following 236-residue polypeptide: LexA repressor (236 aa).

Positions 26-46 form a DNA-binding region, H-T-H motif; it reads FDEMKEALDLRSKSGIHRLIT. Active-site for autocatalytic cleavage activity residues include serine 157 and lysine 195.

Belongs to the peptidase S24 family. Homodimer.

It catalyses the reaction Hydrolysis of Ala-|-Gly bond in repressor LexA.. In terms of biological role, represses a number of genes involved in the response to DNA damage (SOS response), including recA and lexA. In the presence of single-stranded DNA, RecA interacts with LexA causing an autocatalytic cleavage which disrupts the DNA-binding part of LexA, leading to derepression of the SOS regulon and eventually DNA repair. This chain is LexA repressor, found in Azorhizobium caulinodans (strain ATCC 43989 / DSM 5975 / JCM 20966 / LMG 6465 / NBRC 14845 / NCIMB 13405 / ORS 571).